The following is a 231-amino-acid chain: 7-cyano-7-deazaguanine synthase (231 aa).

Position 8–18 (8–18) interacts with ATP; that stretch reads FSGGQDSTTCL. Zn(2+) contacts are provided by C188, C197, C200, and C203.

This sequence belongs to the QueC family. The cofactor is Zn(2+).

It catalyses the reaction 7-carboxy-7-deazaguanine + NH4(+) + ATP = 7-cyano-7-deazaguanine + ADP + phosphate + H2O + H(+). Its pathway is purine metabolism; 7-cyano-7-deazaguanine biosynthesis. Functionally, catalyzes the ATP-dependent conversion of 7-carboxy-7-deazaguanine (CDG) to 7-cyano-7-deazaguanine (preQ(0)). The chain is 7-cyano-7-deazaguanine synthase from Salmonella paratyphi B (strain ATCC BAA-1250 / SPB7).